A 77-amino-acid polypeptide reads, in one-letter code: ATP synthase subunit c (77 aa).

2 helical membrane passes run 7–27 and 57–77; these read AFKY…AALG and VGLI…ILFL.

It belongs to the ATPase C chain family. In terms of assembly, F-type ATPases have 2 components, F(1) - the catalytic core - and F(0) - the membrane proton channel. F(1) has five subunits: alpha(3), beta(3), gamma(1), delta(1), epsilon(1). F(0) has three main subunits: a(1), b(2) and c(10-14). The alpha and beta chains form an alternating ring which encloses part of the gamma chain. F(1) is attached to F(0) by a central stalk formed by the gamma and epsilon chains, while a peripheral stalk is formed by the delta and b chains.

It localises to the cell membrane. Functionally, f(1)F(0) ATP synthase produces ATP from ADP in the presence of a proton or sodium gradient. F-type ATPases consist of two structural domains, F(1) containing the extramembraneous catalytic core and F(0) containing the membrane proton channel, linked together by a central stalk and a peripheral stalk. During catalysis, ATP synthesis in the catalytic domain of F(1) is coupled via a rotary mechanism of the central stalk subunits to proton translocation. Key component of the F(0) channel; it plays a direct role in translocation across the membrane. A homomeric c-ring of between 10-14 subunits forms the central stalk rotor element with the F(1) delta and epsilon subunits. The sequence is that of ATP synthase subunit c from Lactobacillus helveticus (strain DPC 4571).